A 298-amino-acid chain; its full sequence is HTH-type transcriptional regulator ArgP (298 aa).

In terms of domain architecture, HTH lysR-type spans 4–60 (LDYKWIEALDAVVAQGGFERAAEELYISQSAVSQRIKQLERFLAQPVLIREQPPKPT). The segment at residues 21 to 40 (FERAAEELYISQSAVSQRIK) is a DNA-binding region (H-T-H motif).

This sequence belongs to the LysR transcriptional regulatory family. In terms of assembly, homodimer.

Controls the transcription of genes involved in arginine and lysine metabolism. The chain is HTH-type transcriptional regulator ArgP from Vibrio vulnificus (strain CMCP6).